Reading from the N-terminus, the 132-residue chain is CLAVATA3/ESR (CLE)-related protein ESR2 (132 aa).

The first 26 residues, 1–26 (MASRMGMVAIVSLFVCALVASTSVNA), serve as a signal peptide directing secretion. The disordered stretch occupies residues 68 to 132 (NRASKQLDSE…IGPPPFLDRY (65 aa)). Residues Pro82 and Pro85 each carry the hydroxyproline modification. O-linked (Ara...) hydroxyproline glycosylation occurs at Pro85. Residues 123-132 (IGPPPFLDRY) are compositionally biased toward pro residues.

This sequence belongs to the CLV3/ESR signal peptide family. Post-translationally, the O-glycosylation (arabinosylation) of the hydroxyproline Pro-85 enhances binding affinity of the ESR2p peptide for its receptor. In terms of tissue distribution, seed endosperm.

It is found in the secreted. The protein resides in the extracellular space. In terms of biological role, extracellular signal peptide that regulates cell fate. This is CLAVATA3/ESR (CLE)-related protein ESR2 from Zea mays (Maize).